A 152-amino-acid chain; its full sequence is ADP-ribose glycohydrolase OARD1 (152 aa).

N-acetylalanine is present on Ala2. In terms of domain architecture, Macro spans 2 to 152 (AGSPNEDSEG…TDIRITVYTL (151 aa)). Ser4 is modified (phosphoserine). Leu21 is a substrate binding site. The active-site Nucleophile is the Lys84. Residues 119–125 (RIGCGLD) and Leu152 contribute to the substrate site. The active-site Proton acceptor is Asp125.

It is found in the nucleus. The protein localises to the nucleoplasm. Its subcellular location is the nucleolus. The protein resides in the chromosome. It catalyses the reaction 2''-O-acetyl-ADP-D-ribose + H2O = ADP-D-ribose + acetate + H(+). It carries out the reaction 5-O-(ADP-D-ribosyl)-L-glutamyl-[protein] + H2O = L-glutamyl-[protein] + ADP-D-ribose + H(+). The enzyme catalyses alpha-NAD(+) + H2O = ADP-D-ribose + nicotinamide + H(+). Subject to competitive inhibition by the product ADP-ribose. Functionally, ADP-ribose glycohydrolase that hydrolyzes ADP-ribose and acts on different substrates, such as proteins ADP-ribosylated on glutamate and O-acetyl-ADP-D-ribose. Specifically acts as a glutamate mono-ADP-ribosylhydrolase by mediating the removal of mono-ADP-ribose attached to glutamate residues on proteins. Does not act on poly-ADP-ribosylated proteins: the poly-ADP-ribose chain of poly-ADP-ribosylated glutamate residues must by hydrolyzed into mono-ADP-ribosylated glutamate by PARG to become a substrate for OARD1. Deacetylates O-acetyl-ADP ribose, a signaling molecule generated by the deacetylation of acetylated lysine residues in histones and other proteins. Catalyzes the deacylation of O-acetyl-ADP-ribose, O-propionyl-ADP-ribose and O-butyryl-ADP-ribose, yielding ADP-ribose plus acetate, propionate and butyrate, respectively. In Bos taurus (Bovine), this protein is ADP-ribose glycohydrolase OARD1.